The primary structure comprises 245 residues: Eukaryotic translation initiation factor 3 subunit K (245 aa).

One can recognise a PCI domain in the interval 46-227; the sequence is YDCYANLALL…EAKGTVVREN (182 aa).

This sequence belongs to the eIF-3 subunit K family. As to quaternary structure, component of the eukaryotic translation initiation factor 3 (eIF-3) complex.

It is found in the cytoplasm. Its function is as follows. Component of the eukaryotic translation initiation factor 3 (eIF-3) complex, which is involved in protein synthesis of a specialized repertoire of mRNAs and, together with other initiation factors, stimulates binding of mRNA and methionyl-tRNAi to the 40S ribosome. The eIF-3 complex specifically targets and initiates translation of a subset of mRNAs involved in cell proliferation. This chain is Eukaryotic translation initiation factor 3 subunit K, found in Phaeosphaeria nodorum (strain SN15 / ATCC MYA-4574 / FGSC 10173) (Glume blotch fungus).